Consider the following 84-residue polypeptide: Large ribosomal subunit protein bL27 (84 aa).

Residues Met-1–Arg-20 are disordered.

Belongs to the bacterial ribosomal protein bL27 family.

This chain is Large ribosomal subunit protein bL27, found in Blochmanniella pennsylvanica (strain BPEN).